The following is a 544-amino-acid chain: Nucleosome assembly protein 1-like 3 (544 aa).

Disordered regions lie at residues 1 to 109 and 168 to 345; these read MAEA…LFLD and PTEE…KKED. Positions 35-83 are enriched in low complexity; sequence SNSSSSTNSCSSSGSSSSGSSSSSSSSSSSSSSSSSSSSGSSGSSSNGS. A compositionally biased stretch (acidic residues) spans 168 to 192; sequence PTEEECEWNSEEEFSGDEEMQDDTP. Basic and acidic residues-rich tracts occupy residues 207–228, 235–277, and 314–332; these read CNEK…PEAK, PKET…KADS, and PARE…EGVN.

The protein belongs to the nucleosome assembly protein (NAP) family. As to expression, expressed in brain.

The protein resides in the nucleus. Its subcellular location is the cytoplasm. The sequence is that of Nucleosome assembly protein 1-like 3 (Nap1l3) from Mus musculus (Mouse).